We begin with the raw amino-acid sequence, 604 residues long: Pescadillo homolog (604 aa).

Positions 275 to 299 (NSEPAGLIEDKEGEDNKESSKTDES) are disordered. The span at 282 to 299 (IEDKEGEDNKESSKTDES) shows a compositional bias: basic and acidic residues. The BRCT domain maps to 337–427 (ECRSLFKNLK…IILPTEGYIV (91 aa)). Disordered regions lie at residues 518–557 (KTFSNRTADNQPDVVDKSDTKEADDHMEDSHKQAEKDAAD) and 574–604 (IEINQERKKDKVNLLKKRKKNADSSASAKGR). Basic and acidic residues-rich tracts occupy residues 531 to 557 (VVDKSDTKEADDHMEDSHKQAEKDAAD) and 577 to 586 (NQERKKDKVN).

Belongs to the pescadillo family.

The protein localises to the nucleus. It localises to the nucleolus. The protein resides in the nucleoplasm. Its function is as follows. Required for maturation of ribosomal RNAs and formation of the large ribosomal subunit. The sequence is that of Pescadillo homolog (PES) from Oryza sativa subsp. japonica (Rice).